Consider the following 171-residue polypeptide: Ribosome maturation factor RimM (171 aa).

Positions 96 to 170 constitute a PRC barrel domain; sequence AEGEYYYHEI…LVTIHVMEGL (75 aa).

It belongs to the RimM family. In terms of assembly, binds ribosomal protein uS19.

The protein localises to the cytoplasm. Its function is as follows. An accessory protein needed during the final step in the assembly of 30S ribosomal subunit, possibly for assembly of the head region. Essential for efficient processing of 16S rRNA. May be needed both before and after RbfA during the maturation of 16S rRNA. It has affinity for free ribosomal 30S subunits but not for 70S ribosomes. In Bacillus mycoides (strain KBAB4) (Bacillus weihenstephanensis), this protein is Ribosome maturation factor RimM.